The sequence spans 863 residues: Envelope glycoprotein gp160 (863 aa).

Residues 1–31 (MRVMGIRMNYQHLWKWGIMLLGILMTCSVAE) form the signal peptide. The Extracellular portion of the chain corresponds to 32–691 (DLWVTVYYGV…ITKWLWYIKI (660 aa)). Cysteines 53 and 73 form a disulfide. Residues Asn87, Asn129, Asn136, Asn142, Asn143, Asn159, Asn163, Asn194, Asn199, Asn209, Asn246, Asn274, Asn288, Asn301, and Asn307 are each glycosylated (N-linked (GlcNAc...) asparagine; by host). Intrachain disulfides connect Cys118-Cys217, Cys125-Cys208, Cys130-Cys160, Cys230-Cys259, and Cys240-Cys251. The interval 130-159 (CTNAGGNKTTNGNNTTNQEEQMMEKGEMKN) is V1. Positions 160 to 208 (CSFNITTVISDKKKQVHALFYRLDVVPIDDDNSANTSNTNYTNYRLINC) are V2. Residues 308 to 341 (CTRPDNKITRQSTPIGLGQALYTTRIKGDIRQAY) form a V3 region. An intrachain disulfide couples Cys308 to Cys342. Asn343, Asn350, and Asn365 each carry an N-linked (GlcNAc...) asparagine; by host glycan. The segment at 374-384 (PAGGDPEITTH) is CD4-binding loop. Disulfide bonds link Cys388-Cys452 and Cys395-Cys425. Residues 395 to 425 (CNTSRLFNSTWNSSTWNNDTLNSEGTIKLPC) are V4. Asn396, Asn402, Asn406, Asn412, Asn455, Asn468, Asn469, and Asn472 each carry an N-linked (GlcNAc...) asparagine; by host glycan. 2 V5 regions span residues 467-478 (VNNSTNETFRPG) and 470-478 (STNETFRPG). Positions 519 to 539 (AIGLGAVFLGFLGAAGSTMGA) are fusion peptide. Residues 581 to 599 (KQLQARVLAVESYLKDQQL) form an immunosuppression region. Cys605 and Cys611 are joined by a disulfide. N-linked (GlcNAc...) asparagine; by host glycans are attached at residues Asn618, Asn623, Asn632, and Asn644. Residues 640-674 (REIDNYTGVIYSLIENSQIQQEKNEQDLLQLDKWA) adopt a coiled-coil conformation. Residues 669–690 (QLDKWASLWNWFSITKWLWYIK) form an MPER; binding to GalCer region. The helical transmembrane segment at 692-712 (FIMIVGGLIGLRIVFTVLSLV) threads the bilayer. Residues 713–863 (NRVRQGYSPL…VRQGLERALL (151 aa)) lie on the Cytoplasmic side of the membrane. The YXXL motif; contains endocytosis signal signature appears at 719–722 (YSPL). Residues 729-748 (PAPRGPDRPEGIEEEGGEQG) are disordered. Residue Cys771 is the site of S-palmitoyl cysteine; by host attachment. Residues 862–863 (LL) carry the Di-leucine internalization motif motif.

The protein belongs to the HIV-1 env protein family. The mature envelope protein (Env) consists of a homotrimer of non-covalently associated gp120-gp41 heterodimers. The resulting complex protrudes from the virus surface as a spike. There seems to be as few as 10 spikes on the average virion. Interacts with host CD4, CCR5 and CXCR4. Gp120 also interacts with the C-type lectins CD209/DC-SIGN and CLEC4M/DC-SIGNR (collectively referred to as DC-SIGN(R)). Gp120 and gp41 interact with GalCer. Gp120 interacts with host ITGA4/ITGB7 complex; on CD4+ T-cells, this interaction results in rapid activation of integrin ITGAL/LFA-1, which facilitates efficient cell-to-cell spreading of HIV-1. Gp120 interacts with cell-associated heparan sulfate; this interaction increases virus infectivity on permissive cells and may be involved in infection of CD4- cells. In terms of assembly, the mature envelope protein (Env) consists of a homotrimer of non-covalently associated gp120-gp41 heterodimers. The resulting complex protrudes from the virus surface as a spike. There seems to be as few as 10 spikes on the average virion. Post-translationally, highly glycosylated by host. The high number of glycan on the protein is reffered to as 'glycan shield' because it contributes to hide protein sequence from adaptive immune system. Palmitoylation of the transmembrane protein and of Env polyprotein (prior to its proteolytic cleavage) is essential for their association with host cell membrane lipid rafts. Palmitoylation is therefore required for envelope trafficking to classical lipid rafts, but not for viral replication. In terms of processing, specific enzymatic cleavages in vivo yield mature proteins. Envelope glycoproteins are synthesized as an inactive precursor that is heavily N-glycosylated and processed likely by host cell furin in the Golgi to yield the mature SU and TM proteins. The cleavage site between SU and TM requires the minimal sequence [KR]-X-[KR]-R. About 2 of the 9 disulfide bonds of gp41 are reduced by P4HB/PDI, following binding to CD4 receptor.

It is found in the virion membrane. The protein localises to the host cell membrane. It localises to the host endosome membrane. Its function is as follows. Oligomerizes in the host endoplasmic reticulum into predominantly trimers. In a second time, gp160 transits in the host Golgi, where glycosylation is completed. The precursor is then proteolytically cleaved in the trans-Golgi and thereby activated by cellular furin or furin-like proteases to produce gp120 and gp41. In terms of biological role, attaches the virus to the host lymphoid cell by binding to the primary receptor CD4. This interaction induces a structural rearrangement creating a high affinity binding site for a chemokine coreceptor like CXCR4 and/or CCR5. Acts as a ligand for CD209/DC-SIGN and CLEC4M/DC-SIGNR, which are respectively found on dendritic cells (DCs), and on endothelial cells of liver sinusoids and lymph node sinuses. These interactions allow capture of viral particles at mucosal surfaces by these cells and subsequent transmission to permissive cells. HIV subverts the migration properties of dendritic cells to gain access to CD4+ T-cells in lymph nodes. Virus transmission to permissive T-cells occurs either in trans (without DCs infection, through viral capture and transmission), or in cis (following DCs productive infection, through the usual CD4-gp120 interaction), thereby inducing a robust infection. In trans infection, bound virions remain infectious over days and it is proposed that they are not degraded, but protected in non-lysosomal acidic organelles within the DCs close to the cell membrane thus contributing to the viral infectious potential during DCs' migration from the periphery to the lymphoid tissues. On arrival at lymphoid tissues, intact virions recycle back to DCs' cell surface allowing virus transmission to CD4+ T-cells. Acts as a class I viral fusion protein. Under the current model, the protein has at least 3 conformational states: pre-fusion native state, pre-hairpin intermediate state, and post-fusion hairpin state. During fusion of viral and target intracellular membranes, the coiled coil regions (heptad repeats) assume a trimer-of-hairpins structure, positioning the fusion peptide in close proximity to the C-terminal region of the ectodomain. The formation of this structure appears to drive apposition and subsequent fusion of viral and target cell membranes. Complete fusion occurs in host cell endosomes and is dynamin-dependent, however some lipid transfer might occur at the plasma membrane. The virus undergoes clathrin-dependent internalization long before endosomal fusion, thus minimizing the surface exposure of conserved viral epitopes during fusion and reducing the efficacy of inhibitors targeting these epitopes. Membranes fusion leads to delivery of the nucleocapsid into the cytoplasm. The sequence is that of Envelope glycoprotein gp160 from Human immunodeficiency virus type 1 group M subtype D (isolate Z84) (HIV-1).